The primary structure comprises 303 residues: Ribosomal large subunit pseudouridine synthase C (303 aa).

Residues 11-87 (FRLDKYLKRL…AEIKLAKKIL (77 aa)) form the S4 RNA-binding domain. The active site involves Asp-140.

This sequence belongs to the pseudouridine synthase RluA family.

It catalyses the reaction uridine(955/2504/2580) in 23S rRNA = pseudouridine(955/2504/2580) in 23S rRNA. Responsible for synthesis of pseudouridine from uracil at positions 955, 2504 and 2580 in 23S ribosomal RNA. This is Ribosomal large subunit pseudouridine synthase C (rluC) from Rickettsia prowazekii (strain Madrid E).